The following is a 485-amino-acid chain: NADH-quinone oxidoreductase subunit N (485 aa).

The next 14 helical transmembrane spans lie at 8–28 (LIALLPLLIVGLTVVVVMLSI), 35–55 (FLNATLSVLGLNAALVSLWFV), 75–95 (LYTGLVLLASLATCTFAYPWL), 105–125 (FYLLVLIAALGGILLAGANHL), 127–147 (ALFLGIELISLPLFGLVGYAF), 159–179 (YTILSAAASSFLLFGMALVYA), 203–223 (LLAGLGLMIVGLGFKLSLVPF), 235–255 (PAPVSTFLATASKIAIFGVVM), 271–291 (VVLGLIAFASIIFGNLMALSQ), 297–317 (LLGYSSISHLGYLLVALIALQ), 326–346 (VGVYLAGYLFSSLGAFGVVSL), 374–394 (AVMTVMMLSLAGIPMTLGFIG), 408–430 (WWLVAAVVVGSAIGLYYYLRVAV), and 455–475 (IVVLISALLVLVLGIWPQPLI).

It belongs to the complex I subunit 2 family. In terms of assembly, NDH-1 is composed of 13 different subunits. Subunits NuoA, H, J, K, L, M, N constitute the membrane sector of the complex.

It localises to the cell inner membrane. It carries out the reaction a quinone + NADH + 5 H(+)(in) = a quinol + NAD(+) + 4 H(+)(out). NDH-1 shuttles electrons from NADH, via FMN and iron-sulfur (Fe-S) centers, to quinones in the respiratory chain. The immediate electron acceptor for the enzyme in this species is believed to be ubiquinone. Couples the redox reaction to proton translocation (for every two electrons transferred, four hydrogen ions are translocated across the cytoplasmic membrane), and thus conserves the redox energy in a proton gradient. The protein is NADH-quinone oxidoreductase subunit N of Klebsiella pneumoniae (strain 342).